Consider the following 88-residue polypeptide: Cell division topological specificity factor (88 aa).

It belongs to the MinE family.

Functionally, prevents the cell division inhibition by proteins MinC and MinD at internal division sites while permitting inhibition at polar sites. This ensures cell division at the proper site by restricting the formation of a division septum at the midpoint of the long axis of the cell. The chain is Cell division topological specificity factor from Escherichia coli (strain SMS-3-5 / SECEC).